The primary structure comprises 752 residues: Zinc finger BED domain-containing protein RICESLEEPER 3 (752 aa).

The segment at 106–166 (RKKSVVWEHF…ASCPMLKNED (61 aa)) adopts a BED-type zinc-finger fold. Cysteine 129, cysteine 132, histidine 153, and cysteine 159 together coordinate Zn(2+). Residues 647–733 (ELEQYLEEAL…EALFCAKDWL (87 aa)) are HATC (Hobo-Ac-Tam3) domain.

In terms of assembly, homodimer.

The protein resides in the nucleus. Transposase-like protein that is essential for plant growth and development. May regulate global gene expression by recruiting other cellular factors. The protein is Zinc finger BED domain-containing protein RICESLEEPER 3 of Oryza sativa subsp. japonica (Rice).